We begin with the raw amino-acid sequence, 179 residues long: Large ribosomal subunit protein uL5 (179 aa).

The protein belongs to the universal ribosomal protein uL5 family. As to quaternary structure, part of the 50S ribosomal subunit; part of the 5S rRNA/L5/L18/L25 subcomplex. Contacts the 5S rRNA and the P site tRNA. Forms a bridge to the 30S subunit in the 70S ribosome.

Functionally, this is one of the proteins that bind and probably mediate the attachment of the 5S RNA into the large ribosomal subunit, where it forms part of the central protuberance. In the 70S ribosome it contacts protein S13 of the 30S subunit (bridge B1b), connecting the 2 subunits; this bridge is implicated in subunit movement. Contacts the P site tRNA; the 5S rRNA and some of its associated proteins might help stabilize positioning of ribosome-bound tRNAs. This chain is Large ribosomal subunit protein uL5, found in Desulfovibrio desulfuricans (strain ATCC 27774 / DSM 6949 / MB).